Consider the following 490-residue polypeptide: Tektin-3 (490 aa).

O-linked (GalNAc...) threonine glycans are attached at residues T7, T9, and T10. N-linked (GlcNAc...) asparagine glycans are attached at residues N41, N86, N103, N111, N276, and N344. Residues 424 to 451 (VHEVDDTIQTLQQRLRDAEDTLQSLVHI) adopt a coiled-coil conformation.

This sequence belongs to the tektin family. In terms of assembly, microtubule inner protein component of sperm flagellar doublet microtubules. Interacts with TEKT1, TEKT2, TEKT4 and TEKT5. Interacts with CCDC38. In terms of processing, N- and O-glycosylated. Post-translationally, may be proteolytically processed during the epididymal transit of spermatozoa. Ubiquitinated, leading to its degradation. Deubiquitinated by USP16, promoting its stability. As to expression, expressed in spermatozoa. Expressed in airway epithelial cells.

It localises to the cytoplasm. The protein resides in the cytoskeleton. Its subcellular location is the cilium axoneme. The protein localises to the flagellum axoneme. It is found in the cytoplasmic vesicle. It localises to the secretory vesicle. The protein resides in the acrosome outer membrane. Functionally, microtubule inner protein (MIP) part of the dynein-decorated doublet microtubules (DMTs) in cilia and flagellar axoneme. Forms filamentous polymers in the walls of ciliary and flagellar microtubules. Required for normal sperm mobility. The protein is Tektin-3 (TEKT3) of Homo sapiens (Human).